Reading from the N-terminus, the 476-residue chain is Glutamyl-tRNA(Gln) amidotransferase subunit A (476 aa).

Active-site charge relay system residues include K70 and S145. The Acyl-ester intermediate role is filled by S169.

This sequence belongs to the amidase family. GatA subfamily. In terms of assembly, heterotrimer of A, B and C subunits.

The enzyme catalyses L-glutamyl-tRNA(Gln) + L-glutamine + ATP + H2O = L-glutaminyl-tRNA(Gln) + L-glutamate + ADP + phosphate + H(+). In terms of biological role, allows the formation of correctly charged Gln-tRNA(Gln) through the transamidation of misacylated Glu-tRNA(Gln) in organisms which lack glutaminyl-tRNA synthetase. The reaction takes place in the presence of glutamine and ATP through an activated gamma-phospho-Glu-tRNA(Gln). The polypeptide is Glutamyl-tRNA(Gln) amidotransferase subunit A (Methanosarcina acetivorans (strain ATCC 35395 / DSM 2834 / JCM 12185 / C2A)).